The following is a 546-amino-acid chain: Plastidic glucose transporter 4 (546 aa).

12 consecutive transmembrane segments (helical) span residues 105–125, 148–168, 182–202, 205–225, 240–260, 265–285, 345–365, 381–401, 410–430, 441–461, 477–497, and 503–523; these read VLPF…HLGV, WIVS…GALA, IPLA…TMIV, LLAG…ISEI, LFIC…AANP, TMFG…AFSP, VVSV…NAVV, VAAS…ASSL, LLLT…LSFT, LAVV…GPVP, AVAL…LYFL, and FGIS…VLYI.

The protein belongs to the major facilitator superfamily. Sugar transporter (TC 2.A.1.1) family.

Its subcellular location is the plastid. The protein localises to the chloroplast inner membrane. Its function is as follows. May be involved in the efflux of glucose towards the cytosol. The sequence is that of Plastidic glucose transporter 4 from Arabidopsis thaliana (Mouse-ear cress).